Here is a 394-residue protein sequence, read N- to C-terminus: Elongation factor Tu (394 aa).

The tr-type G domain occupies 10-204 (KPHVNVGTIG…HLDSYIPEPE (195 aa)). Positions 19 to 26 (GHVDHGKT) are G1. A GTP-binding site is contributed by 19-26 (GHVDHGKT). T26 is a binding site for Mg(2+). Residues 60–64 (GITIN) are G2. The interval 81-84 (DCPG) is G3. GTP contacts are provided by residues 81 to 85 (DCPGH) and 136 to 139 (NKCD). A G4 region spans residues 136–139 (NKCD). Positions 174 to 176 (SAL) are G5.

This sequence belongs to the TRAFAC class translation factor GTPase superfamily. Classic translation factor GTPase family. EF-Tu/EF-1A subfamily. In terms of assembly, monomer.

It localises to the cytoplasm. The enzyme catalyses GTP + H2O = GDP + phosphate + H(+). Functionally, GTP hydrolase that promotes the GTP-dependent binding of aminoacyl-tRNA to the A-site of ribosomes during protein biosynthesis. In Haemophilus ducreyi (strain 35000HP / ATCC 700724), this protein is Elongation factor Tu.